A 301-amino-acid chain; its full sequence is Glycine--tRNA ligase alpha subunit (301 aa).

Belongs to the class-II aminoacyl-tRNA synthetase family. In terms of assembly, tetramer of two alpha and two beta subunits.

It localises to the cytoplasm. The enzyme catalyses tRNA(Gly) + glycine + ATP = glycyl-tRNA(Gly) + AMP + diphosphate. The polypeptide is Glycine--tRNA ligase alpha subunit (Shewanella denitrificans (strain OS217 / ATCC BAA-1090 / DSM 15013)).